The primary structure comprises 676 residues: Vitamin K-dependent protein S (676 aa).

Residues 1-24 (MRVLGGRCGALLACLLLVLPVSEA) form the signal peptide. The propeptide occupies 25–41 (NFLSKQQASQVLVRKRR). Positions 42-87 (ANSLLEETKQGNLERECIEELCNKEEAREVFENDPETDYFYPKYLV) constitute a Gla domain. 4-carboxyglutamate occurs at positions 47, 48, 55, 57, 60, 61, 66, 67, 70, 73, and 77. The cysteines at positions 58 and 63 are disulfide-linked. Residues 88–116 (CLRSFQTGLFTAARQSTNAYPDLRSCVNA) form a thrombin-sensitive region. The EGF-like 1 domain maps to 117–155 (IPDQCSPLPCNEDGYMSCKDGKASFTCTCKPGWQGEKCE). 13 cysteine pairs are disulfide-bonded: C121–C134, C126–C143, C145–C154, C161–C175, C171–C184, C186–C199, C205–C217, C212–C226, C228–C241, C247–C256, C252–C265, C267–C282, and C449–C475. Residue D136 is modified to (3R)-3-hydroxyaspartate. The 44-residue stretch at 157 to 200 (DINECKDPSNINGGCSQICDNTPGSYHCSCKNGFVMLSNKKDCK) folds into the EGF-like 2; calcium-binding domain. The region spanning 201-242 (DVDECSLKPSICGTAVCKNIPGDFECECPEGYRYNLKSKSCE) is the EGF-like 3; calcium-binding domain. Residues 243-283 (DIDECSENMCAQLCVNYPGGYTCYCDGKKGFKLAQDQKSCE) form the EGF-like 4; calcium-binding domain. 2 consecutive Laminin G-like domains span residues 299–475 (LLYL…NKHC) and 484–666 (YYPG…AHSC). Residues N499, N509, and N530 are each glycosylated (N-linked (GlcNAc...) asparagine). The cysteines at positions 639 and 666 are disulfide-linked.

The iron and 2-oxoglutarate dependent 3-hydroxylation of aspartate and asparagine is (R) stereospecific within EGF domains. As to expression, plasma.

It is found in the secreted. Functionally, anticoagulant plasma protein; it is a cofactor to activated protein C in the degradation of coagulation factors Va and VIIIa. It helps to prevent coagulation and stimulating fibrinolysis. The protein is Vitamin K-dependent protein S (PROS1) of Homo sapiens (Human).